A 245-amino-acid polypeptide reads, in one-letter code: Gas vesicle protein F (245 aa).

It belongs to the gas vesicle GvpF/GvpL family. Binds GvpA.

It is found in the gas vesicle. In terms of biological role, a minor component of the gas vesicle, may be involved in preventing GvpA aggregation during gas vesicle nucleation. Gas vesicles (GV) are hollow, gas filled proteinaceous nanostructures. During planktonic growth they allow positioning of the organism at a favorable depth for light or nutrient acquisition. In Dolichospermum flosaquae (Anabaena flos-aquae), this protein is Gas vesicle protein F.